The chain runs to 973 residues: Putative helicase 022R (973 aa).

Residues 473–502 (AKARGGRDSGNEDDEEDSATDEDDSNPWDS) are disordered. Over residues 483-498 (NEDDEEDSATDEDDSN) the composition is skewed to acidic residues. In terms of domain architecture, SF3 helicase spans 658–840 (GPVTKLLAFF…FVTPGTTAPA (183 aa)). 702–709 (GTGNNGKT) provides a ligand contact to ATP.

This chain is Putative helicase 022R, found in Frog virus 3 (isolate Goorha) (FV-3).